The sequence spans 447 residues: Phosphoglucosamine mutase (447 aa).

The active-site Phosphoserine intermediate is serine 107. 4 residues coordinate Mg(2+): serine 107, aspartate 246, aspartate 248, and aspartate 250. Serine 107 is subject to Phosphoserine.

Belongs to the phosphohexose mutase family. Requires Mg(2+) as cofactor. In terms of processing, activated by phosphorylation.

It catalyses the reaction alpha-D-glucosamine 1-phosphate = D-glucosamine 6-phosphate. Functionally, catalyzes the conversion of glucosamine-6-phosphate to glucosamine-1-phosphate. The protein is Phosphoglucosamine mutase of Ralstonia nicotianae (strain ATCC BAA-1114 / GMI1000) (Ralstonia solanacearum).